The sequence spans 546 residues: Chaperonin GroEL (546 aa).

Residues 29 to 32, K50, 86 to 90, G414, and D495 contribute to the ATP site; these read TLGP and DGTTT. Positions 526-546 are disordered; the sequence is AKEGAPAGGGMPDMGGMGGMM. Gly residues predominate over residues 531–546; the sequence is PAGGGMPDMGGMGGMM.

The protein belongs to the chaperonin (HSP60) family. In terms of assembly, forms a cylinder of 14 subunits composed of two heptameric rings stacked back-to-back. Interacts with the co-chaperonin GroES.

It is found in the cytoplasm. The enzyme catalyses ATP + H2O + a folded polypeptide = ADP + phosphate + an unfolded polypeptide.. Together with its co-chaperonin GroES, plays an essential role in assisting protein folding. The GroEL-GroES system forms a nano-cage that allows encapsulation of the non-native substrate proteins and provides a physical environment optimized to promote and accelerate protein folding. The polypeptide is Chaperonin GroEL (Jannaschia sp. (strain CCS1)).